We begin with the raw amino-acid sequence, 507 residues long: Cobyric acid synthase (507 aa).

A GATase cobBQ-type domain is found at 249-451 (DIEIAVINLP…IHGIFENREF (203 aa)). The active-site Nucleophile is the cysteine 330. Histidine 443 is a catalytic residue.

This sequence belongs to the CobB/CobQ family. CobQ subfamily.

It participates in cofactor biosynthesis; adenosylcobalamin biosynthesis. Catalyzes amidations at positions B, D, E, and G on adenosylcobyrinic A,C-diamide. NH(2) groups are provided by glutamine, and one molecule of ATP is hydrogenolyzed for each amidation. This is Cobyric acid synthase from Thermoanaerobacter sp. (strain X514).